Here is a 157-residue protein sequence, read N- to C-terminus: Aspartate carbamoyltransferase regulatory chain (157 aa).

Zn(2+) contacts are provided by C108, C113, C138, and C141.

Belongs to the PyrI family. Contains catalytic and regulatory chains. It depends on Zn(2+) as a cofactor.

In terms of biological role, involved in allosteric regulation of aspartate carbamoyltransferase. The chain is Aspartate carbamoyltransferase regulatory chain from Ignicoccus hospitalis (strain KIN4/I / DSM 18386 / JCM 14125).